Reading from the N-terminus, the 166-residue chain is Endoribonuclease YbeY (166 aa).

Histidine 125, histidine 129, and histidine 135 together coordinate Zn(2+).

The protein belongs to the endoribonuclease YbeY family. Requires Zn(2+) as cofactor.

It is found in the cytoplasm. Single strand-specific metallo-endoribonuclease involved in late-stage 70S ribosome quality control and in maturation of the 3' terminus of the 16S rRNA. This is Endoribonuclease YbeY from Alkalilimnicola ehrlichii (strain ATCC BAA-1101 / DSM 17681 / MLHE-1).